The sequence spans 304 residues: N-acetylmuramic acid 6-phosphate etherase 1 (304 aa).

Polar residues predominate over residues 1–10 (MENSHLGSLT). Residues 1-20 (MENSHLGSLTTERRNERSKR) are disordered. Residues 58–221 (AVGSLKKGGR…STAAMIKMGK (164 aa)) form the SIS domain. The Proton donor role is filled by glutamate 86. Glutamate 117 is a catalytic residue.

This sequence belongs to the GCKR-like family. MurNAc-6-P etherase subfamily. As to quaternary structure, homodimer.

It carries out the reaction N-acetyl-D-muramate 6-phosphate + H2O = N-acetyl-D-glucosamine 6-phosphate + (R)-lactate. It participates in amino-sugar metabolism; N-acetylmuramate degradation. Functionally, specifically catalyzes the cleavage of the D-lactyl ether substituent of MurNAc 6-phosphate, producing GlcNAc 6-phosphate and D-lactate. In Bacillus licheniformis (strain ATCC 14580 / DSM 13 / JCM 2505 / CCUG 7422 / NBRC 12200 / NCIMB 9375 / NCTC 10341 / NRRL NRS-1264 / Gibson 46), this protein is N-acetylmuramic acid 6-phosphate etherase 1.